A 661-amino-acid polypeptide reads, in one-letter code: DNA cross-link repair protein PSO2/SNM1 (661 aa).

A disordered region spans residues 1 to 44; the sequence is MSRKSIVQIRRSEVKRKRSSTASSTSEGKTLHKNTHTSSKRQRT. Positions 31–43 are enriched in basic residues; it reads LHKNTHTSSKRQR. The UBZ4-type zinc-finger motif lies at 144–174; it reads VIQCPICLENLSHLELYERETHCDTCIGSDP. The Zn(2+) site is built by Cys147, Cys150, His165, and Cys169.

It belongs to the DNA repair metallo-beta-lactamase (DRMBL) family.

It is found in the nucleus. Required for DNA interstrand cross-link repair. This requires cleavage of cross-linked DNA to generate DNA double strand breaks (DSBs). This protein has 5' exonuclease activity on single-stranded and double-stranded DNA, which appears to be necessary for the processing of DNA double strand breaks prior to ligation. The polypeptide is DNA cross-link repair protein PSO2/SNM1 (PSO2) (Saccharomyces cerevisiae (strain ATCC 204508 / S288c) (Baker's yeast)).